Here is a 143-residue protein sequence, read N- to C-terminus: Large ribosomal subunit protein uL16 (143 aa).

Positions 1 to 14 (MLTPKRVKWRRQHR) are enriched in basic residues. The disordered stretch occupies residues 1–23 (MLTPKRVKWRRQHRPDRAGKAKG).

This sequence belongs to the universal ribosomal protein uL16 family. In terms of assembly, part of the 50S ribosomal subunit.

Functionally, binds 23S rRNA and is also seen to make contacts with the A and possibly P site tRNAs. In Desulforudis audaxviator (strain MP104C), this protein is Large ribosomal subunit protein uL16.